A 179-amino-acid polypeptide reads, in one-letter code: MARFQEFYKEKVVPGLIEKFGYKSVMEVPRITKITLNMGLGEAVADKKIIENAVGDLTKIAGQKPVVTKARKAIAGFKIRQGYPIGAMVTLRGRAMYEFLDRFVTVALPRVRDFRGVSGRAFDGRGNYNIGVKEQIIFPEIDYDKIDALRGLNISIMTTAKTDDEAKALLASFKFPFRN.

This sequence belongs to the universal ribosomal protein uL5 family. In terms of assembly, part of the 50S ribosomal subunit; part of the 5S rRNA/L5/L18/L25 subcomplex. Contacts the 5S rRNA and the P site tRNA. Forms a bridge to the 30S subunit in the 70S ribosome.

Its function is as follows. This is one of the proteins that bind and probably mediate the attachment of the 5S RNA into the large ribosomal subunit, where it forms part of the central protuberance. In the 70S ribosome it contacts protein S13 of the 30S subunit (bridge B1b), connecting the 2 subunits; this bridge is implicated in subunit movement. Contacts the P site tRNA; the 5S rRNA and some of its associated proteins might help stabilize positioning of ribosome-bound tRNAs. The protein is Large ribosomal subunit protein uL5 of Burkholderia mallei (strain ATCC 23344).